A 378-amino-acid polypeptide reads, in one-letter code: O-glycoside alpha-1,2-mannosyltransferase homolog 3 (378 aa).

The Cytoplasmic portion of the chain corresponds to 1-6 (MGIPKS). Residues 7–24 (SIYFCILLFCIISFYLQS) form a helical; Signal-anchor for type II membrane protein membrane-spanning segment. Topologically, residues 25–378 (SKDGPKELKV…AIKWLENINS (354 aa)) are lumenal. The active-site Nucleophile is Glu276.

The protein belongs to the glycosyltransferase 15 family.

Its subcellular location is the endoplasmic reticulum membrane. It localises to the golgi apparatus membrane. Its function is as follows. Probable mannosyltransferase involved in O-glycosylation of cell wall and secreted proteins. This is O-glycoside alpha-1,2-mannosyltransferase homolog 3 (omh3) from Schizosaccharomyces pombe (strain 972 / ATCC 24843) (Fission yeast).